The primary structure comprises 383 residues: Transposase InsI for insertion sequence element IS30A (383 aa).

The Integrase catalytic domain occupies 213–379; that stretch reads VNGTPIHERS…TPKEIIERGV (167 aa).

It belongs to the transposase IS30 family.

Functionally, required for the transposition of the insertion element. The chain is Transposase InsI for insertion sequence element IS30A (insI1) from Escherichia coli (strain K12).